The following is a 177-amino-acid chain: MSRIGKKPVQVPAGVTANVDGQKVTAKGPKGELFFVANDEVSVKLENNTVVVQPVNESKDARAKWGMSRTMIENILKGVKDGYERKLEINGVGYRASMQGKNLQLALGFSHDVVYQTPEGITIAVPKPTEIVVSGINKQQVGQVAAEIREYRGPEPYKGKGVKYAEERIVRKEGKKK.

It belongs to the universal ribosomal protein uL6 family. As to quaternary structure, part of the 50S ribosomal subunit.

Its function is as follows. This protein binds to the 23S rRNA, and is important in its secondary structure. It is located near the subunit interface in the base of the L7/L12 stalk, and near the tRNA binding site of the peptidyltransferase center. This chain is Large ribosomal subunit protein uL6, found in Sinorhizobium medicae (strain WSM419) (Ensifer medicae).